Reading from the N-terminus, the 1279-residue chain is Photoreceptor cilium actin regulator (1279 aa).

Glycine 2 is lipidated: N-myristoyl glycine. Cysteine 3 carries S-palmitoyl cysteine lipidation. 5 disordered regions span residues 101 to 168 (NKPQ…KGRV), 380 to 598 (AAQV…SHVE), 802 to 821 (EVSESEDISGDVEEDLENLP), 860 to 1107 (ASHP…TTAK), and 1127 to 1279 (KSSS…KEIS). Basic and acidic residues predominate over residues 126–168 (FSGKESKENTPQETSKGNRESVCHQPDSQDHCRQSATESKGRV). A compositionally biased stretch (acidic residues) spans 477–491 (SEEEDCSPEEEDELS). Basic and acidic residues-rich tracts occupy residues 535 to 547 (LKMKEAISERIKF) and 580 to 598 (GPERQRRSQSEGCLKSHVE). A compositionally biased stretch (acidic residues) spans 804–818 (SESEDISGDVEEDLE). Polar residues-rich tracts occupy residues 886–901 (GSGSSPRLHSTRSGST), 913–925 (DLNSKQTASPSSE), and 955–965 (TNPTPGQSRTL). A compositionally biased stretch (basic and acidic residues) spans 972–990 (FSRDPHSSEASRKGPERSL). The span at 1047 to 1062 (RKTTSPPCQHPQSNPA) shows a compositional bias: polar residues. Residues 1076–1090 (PSSASCSSPSVSPSR) are compositionally biased toward low complexity. A compositionally biased stretch (basic and acidic residues) spans 1091-1100 (GSKDSIHSED). Residues 1226-1241 (WNNSRVPELQGSSTKR) are compositionally biased toward polar residues. Residues 1259–1279 (RMNRGQDRPQPESQPQHKEIS) show a composition bias toward basic and acidic residues.

Specifically expressed in retina.

The protein resides in the cell projection. Its subcellular location is the cilium. It localises to the photoreceptor outer segment. It is found in the photoreceptor inner segment. Plays an essential role for normal photoreceptor cell maintenance and vision. The sequence is that of Photoreceptor cilium actin regulator from Mus musculus (Mouse).